Reading from the N-terminus, the 374-residue chain is 4-galactosyl-N-acetylglucosaminide 3-alpha-L-fucosyltransferase FUT5 (374 aa).

Over 1–15 (MDPLGPAKPQWLWRR) the chain is Cytoplasmic. A helical; Signal-anchor for type II membrane protein transmembrane segment spans residues 16-34 (CLAGLLFQLLVAVCFFSYL). Over 35–374 (RVSRDDATGS…TVRSIAAWFT (340 aa)) the chain is Lumenal. 4 N-linked (GlcNAc...) asparagine glycosylation sites follow: Asn-60, Asn-105, Asn-167, and Asn-198.

It belongs to the glycosyltransferase 10 family. Liver, colon and testis and trace amounts in T-cells and brain.

The protein localises to the golgi apparatus. It is found in the golgi stack membrane. It catalyses the reaction a beta-D-galactosyl-(1-&gt;3)-N-acetyl-beta-D-glucosaminyl derivative + GDP-beta-L-fucose = a beta-D-galactosyl-(1-&gt;3)-[alpha-L-fucosyl-(1-&gt;4)]-N-acetyl-beta-D-glucosaminyl derivative + GDP + H(+). The catalysed reaction is an N-acetyl-alpha-neuraminyl-(2-&gt;3)-beta-D-galactosyl-(1-&gt;4)-N-acetyl-beta-D-glucosaminyl derivative + GDP-beta-L-fucose = an alpha-Neu5Ac-(2-&gt;3)-beta-D-Gal-(1-&gt;4)-[alpha-L-Fuc-(1-&gt;3)]-beta-D-GlcNAc derivative + GDP + H(+). It carries out the reaction an alpha-Neu5Ac-(2-&gt;3)-beta-D-Gal-(1-&gt;4)-beta-D-GlcNAc-(1-&gt;3)-beta-D-Gal-(1-&gt;4)-[alpha-L-Fuc-(1-&gt;3)]-beta-D-GlcNAc derivative + GDP-beta-L-fucose = an alpha-Neu5Ac-(2-&gt;3)-beta-D-Gal-(1-&gt;4)-[alpha-L-Fuc-(1-&gt;3)]-beta-D-GlcNAc-(1-&gt;3)-beta-D-Gal-(1-&gt;4)-[alpha-L-Fuc-(1-&gt;3)]-beta-D-GlcNAc derivative + GDP + H(+). The enzyme catalyses a beta-D-galactosyl-(1-&gt;4)-N-acetyl-beta-D-glucosaminyl derivative + GDP-beta-L-fucose = a beta-D-galactosyl-(1-&gt;4)-[alpha-L-fucosyl-(1-&gt;3)]-N-acetyl-beta-D-glucosaminyl derivative + GDP + H(+). It catalyses the reaction a neolactoside nLc4Cer + GDP-beta-L-fucose = a neolactoside III(3)-alpha-Fuc-nLc4Cer + GDP + H(+). The catalysed reaction is a neolactoside nLc6Cer + GDP-beta-L-fucose = beta-D-galactosyl-(1-&gt;4)-N-acetyl-beta-D-glucosaminyl-(1-&gt;3)-beta-D-galactosyl-(1-&gt;4)-[alpha-L-fucosyl-(1-&gt;3)]-N-acetyl-beta-D-glucosaminyl-(1-&gt;3)-beta-D-galactosyl-(1-&gt;4)-beta-D-glucosyl-(1&lt;-&gt;1')-ceramide + GDP + H(+). It carries out the reaction a neolactoside nLc6Cer(d18:1(4E)) + GDP-beta-L-fucose = a neolactoside III(3)-alpha-Fuc-nLc6Cer(d18:1(4E)) + GDP + H(+). The enzyme catalyses a neolactoside nLc4Cer(d18:1(4E)) + GDP-beta-L-fucose = a neolactoside III(3)-alpha-Fuc-nLc4Cer(d18:1(4E)) + GDP + H(+). It catalyses the reaction a neolactoside VI(3)-alpha-NeuNAc-nLc6Cer + GDP-beta-L-fucose = a neolactoside VI(3)-alpha-NeuAc,III(3)-alphaFuc-nLc6Cer + GDP + H(+). The catalysed reaction is beta-D-galactosyl-(1-&gt;4)-N-acetyl-D-glucosamine + GDP-beta-L-fucose = beta-D-galactosyl-(1-&gt;4)-[alpha-L-fucosyl-(1-&gt;3)]-N-acetyl-D-glucosamine + GDP + H(+). It carries out the reaction N-acetyl-alpha-neuraminosyl-(2-&gt;3)-beta-D-galactosyl-(1-&gt;4)-N-acetyl-beta-D-glucosamine + GDP-beta-L-fucose = N-acetyl-alpha-neuraminosyl-(2-&gt;3)-beta-D-galactosyl-(1-&gt;4)-[alpha-L-fucosyl-(1-&gt;3)]-N-acetyl-beta-D-glucosamine + GDP + H(+). The enzyme catalyses alpha-L-Fuc-(1-&gt;2)-beta-D-Gal-(1-&gt;4)-D-GlcNAc + GDP-beta-L-fucose = alpha-L-Fuc-(1-&gt;2)-beta-D-Gal-(1-&gt;4)-[alpha-L-Fuc-(1-&gt;3)]-D-GlcNAc + GDP + H(+). It catalyses the reaction an alpha-Neu5Ac-(2-&gt;3)-beta-D-Gal-(1-&gt;3)-D-GlcNAc derivative + GDP-beta-L-fucose = an alpha-Neu5Ac-(2-&gt;3)-beta-D-Gal-(1-&gt;3)-[alpha-L-Fuc-(1-&gt;4)]-beta-D-GlcNAc derivative + GDP + H(+). It participates in protein modification; protein glycosylation. In terms of biological role, catalyzes preferentially the transfer of L-fucose, from a guanosine diphosphate-beta-L-fucose, to the N-acetyl-beta-D-glucosamine (GlcNAc) of an N-acetyllactosamine unit (type 2 chain) of an oligosaccharide, or a glycoprotein- and a glycolipid-linked N-acetyllactosamine unit via an alpha (1,3) linkage and participates in the surface expression of VIM-2, Lewis X/SSEA-1 and sialyl Lewis X antigens. Preferentially transfers fucose to the GlcNAc of an internal N-acetyllactosamine unit of a poly-N-acetyllactosamine chain acceptor substrate. Also catalyzes to a lesser extend the transfer of L-fucose to the GlcNAc of a type 1 (beta-D-galactosyl-(1-&gt;3)-N-acetyl-beta-D-glucosaminyl) or H-type 1 (alpha-L-Fuc-(1-&gt;2)-beta-D-Gal-(1-&gt;3)-D-GlcNAc) chain oligosaccharide via an alpha (1,4) linkage. Preferentially catalyzes sialylated type 2 oligosaccharide acceptors over neutral type 2 or H type 2 (alpha-L-Fuc-(1-&gt;2)-beta-D-Gal-(1-&gt;4)-D-GlcNAc) oligosaccharide acceptors. Lactose-based structures are also acceptor substrates. This chain is 4-galactosyl-N-acetylglucosaminide 3-alpha-L-fucosyltransferase FUT5, found in Homo sapiens (Human).